The following is a 249-amino-acid chain: Type III pantothenate kinase (249 aa).

Residue 6–13 coordinates ATP; that stretch reads DCGNSFIK. Substrate contacts are provided by residues Tyr-93 and 100–103; that span reads GLDR. Asp-102 acts as the Proton acceptor in catalysis. Asp-122 contacts K(+). Thr-125 is an ATP binding site. Thr-181 is a substrate binding site.

This sequence belongs to the type III pantothenate kinase family. Homodimer. NH4(+) serves as cofactor. The cofactor is K(+).

It localises to the cytoplasm. It catalyses the reaction (R)-pantothenate + ATP = (R)-4'-phosphopantothenate + ADP + H(+). It participates in cofactor biosynthesis; coenzyme A biosynthesis; CoA from (R)-pantothenate: step 1/5. Functionally, catalyzes the phosphorylation of pantothenate (Pan), the first step in CoA biosynthesis. This is Type III pantothenate kinase from Pseudomonas fluorescens (strain Pf0-1).